We begin with the raw amino-acid sequence, 142 residues long: Large ribosomal subunit protein uL11 (142 aa).

It belongs to the universal ribosomal protein uL11 family. As to quaternary structure, part of the ribosomal stalk of the 50S ribosomal subunit. Interacts with L10 and the large rRNA to form the base of the stalk. L10 forms an elongated spine to which L12 dimers bind in a sequential fashion forming a multimeric L10(L12)X complex. One or more lysine residues are methylated.

Its function is as follows. Forms part of the ribosomal stalk which helps the ribosome interact with GTP-bound translation factors. This Ruthia magnifica subsp. Calyptogena magnifica protein is Large ribosomal subunit protein uL11.